The primary structure comprises 142 residues: SLSDKDKAAVKLLWSKISKSSDAIGNDALSRMIVVYPQTKTYFAHWPDLSPGSPHVKAHGKTVMGGIALAVSKIDDLRAGLLDLSEQHAYKLRVDPANFKILSHCILVVISMMFPKEFTPEAHVSLDKFLSGVSLALSERYR.

Ser1 carries the N-acetylserine modification. Positions 1-142 (SLSDKDKAAV…VSLALSERYR (142 aa)) constitute a Globin domain. Residue His59 coordinates O2. His88 lines the heme b pocket.

This sequence belongs to the globin family. As to quaternary structure, hb1 is a heterotetramer of two alpha-1 chains and two beta-1 chains. Hb2 is a heterotetramer of two alpha-2 chains and two beta-1 chains. HbC is a heterotetramer of two alpha-1 chains and two beta-2 chains. As to expression, red blood cells.

In terms of biological role, involved in oxygen transport from gills to the various peripheral tissues. The chain is Hemoglobin subunit alpha 1 from Eleginops maclovinus (Patagonian blennie).